Reading from the N-terminus, the 587-residue chain is Heavy metal-associated isoprenylated plant protein 33 (587 aa).

In terms of domain architecture, HMA spans Ile9 to Glu72. 2 residues coordinate a metal cation: Cys20 and Cys23. Disordered regions lie at residues Gln98–Pro146, Leu176–Met261, Ala287–Asn449, Pro462–Gln504, and Tyr532–Met587. Gly residues-rich tracts occupy residues Lys104 to Pro113 and Lys121 to Pro140. Over residues Pro194–Lys208 the composition is skewed to low complexity. Acidic residues predominate over residues Pro215–Asp248. Composition is skewed to gly residues over residues Asn290–Lys300, Met312–Pro419, and Gly428–Gly445. Low complexity predominate over residues Ser471–Val483. Composition is skewed to pro residues over residues Arg534–Gln547 and Tyr554–Pro565. Residues Asp578 to Met587 are compositionally biased toward polar residues. Cys584 is subject to Cysteine methyl ester. Residue Cys584 is the site of S-farnesyl cysteine attachment. Residues Asn585–Met587 constitute a propeptide, removed in mature form.

Belongs to the HIPP family.

Heavy-metal-binding protein. The sequence is that of Heavy metal-associated isoprenylated plant protein 33 from Arabidopsis thaliana (Mouse-ear cress).